A 90-amino-acid polypeptide reads, in one-letter code: PIK3R3 upstream open reading frame protein (90 aa).

The tract at residues 1–63 (MGPSQLVRAP…PASEATNISD (63 aa)) is disordered. Positions 27-46 (PRRRCPSMFKCSRRTYRQKP) are enriched in basic residues. A compositionally biased stretch (polar residues) spans 50-63 (TATNPASEATNISD).

This Mus musculus (Mouse) protein is PIK3R3 upstream open reading frame protein.